Consider the following 225-residue polypeptide: MAKLLLYFLLLTSLSDVFGGTDMSKKTFVFPKETDNSYVSLKAQLKKPLSAFTVCLHIYTELFMTRGYSIFSYATEKEANEILIFWSKDRGYILGVGGIEMPFKAPEIPSAPVHICTSWESVSGIIELWVDGKAQVRKSLQKGYFVGTEAMIILGQDQDSFGGSFDANQSFVGDIGDVNMWDFVLSPKEIDMVYSGGTFSPNVLSWRSLTYETHGEVFIKPQLWP.

The signal sequence occupies residues 1–19 (MAKLLLYFLLLTSLSDVFG). The 202-residue stretch at 24–225 (SKKTFVFPKE…EVFIKPQLWP (202 aa)) folds into the Pentraxin (PTX) domain. C55 and C116 form a disulfide bridge. The Ca(2+) site is built by N80, Q158, D159, and Q169.

This sequence belongs to the pentraxin family. Homopentamer. Pentraxin (or pentaxin) have a discoid arrangement of 5 non-covalently bound subunits. Interacts with FCN1; may regulate monocyte activation by FCN1. Ca(2+) is required as a cofactor. Found in plasma.

Its subcellular location is the secreted. In terms of biological role, displays several functions associated with host defense: it promotes agglutination, bacterial capsular swelling, phagocytosis and complement fixation through its calcium-dependent binding to phosphorylcholine. Can interact with DNA and histones and may scavenge nuclear material released from damaged circulating cells. This Cavia porcellus (Guinea pig) protein is C-reactive protein (CRP).